The chain runs to 409 residues: Shaggy-related protein kinase NtK-1 (409 aa).

A disordered region spans residues 1-27; sequence MTSVGLAPVSGLRESSSHSVGVDRLPE. One can recognise a Protein kinase domain in the interval 73–357; that stretch reads YMAERIVGQG…ALEAVTHAFF (285 aa). ATP-binding positions include 79–87 and Lys-102; that span reads VGQGSFGVV. The Proton acceptor role is filled by Asp-198.

It belongs to the protein kinase superfamily. CMGC Ser/Thr protein kinase family. GSK-3 subfamily. In terms of processing, autophosphorylated mainly on threonine and serine residues.

It catalyses the reaction L-seryl-[protein] + ATP = O-phospho-L-seryl-[protein] + ADP + H(+). The enzyme catalyses L-threonyl-[protein] + ATP = O-phospho-L-threonyl-[protein] + ADP + H(+). In terms of biological role, may mediate extracellular signals to regulate transcription in differentiating cells. The protein is Shaggy-related protein kinase NtK-1 (NTK-1) of Nicotiana tabacum (Common tobacco).